The chain runs to 552 residues: DnaJ homolog subfamily C member 1 (552 aa).

The N-terminal stretch at 1–43 (MWVPGFGSARLPQRRRSGLESSSVRPLWLLLLFLLAAVRPVRA) is a signal peptide. The Lumenal portion of the chain corresponds to 44–149 (WESGDLELFD…RRVRKMSNAE (106 aa)). Residues 56–129 (EEVQLNFYEF…RYDDVLINGL (74 aa)) form the J domain. A helical transmembrane segment spans residues 150 to 170 (LALLLFIILTVGHYAVVWSIY). The Cytoplasmic portion of the chain corresponds to 171–552 (LEKQLDELLG…LVQKKKQAKS (382 aa)). The region spanning 323-377 (RQAPEWTEEDLSQLTRSMVKFPGGTPGRWDKIAHELGRSVTDVTTKAKELKDSVT) is the SANT 1 domain. The tract at residues 370-495 (KELKDSVTSS…ERTRAAEEAW (126 aa)) is disordered. S379 is modified (phosphoserine). Residues 419-431 (MEDEEHEAAEGEQ) are compositionally biased toward acidic residues. Residues 453-470 (TRVEPEEKLRGKRQKDFD) are compositionally biased toward basic and acidic residues. A phosphoserine mark is found at S477 and S478. The segment covering 480–492 (EEKQRKERTRAAE) has biased composition (basic and acidic residues). Positions 490-545 (AAEEAWTQSQQKLLELALQQYPKGASDRWDKIAKCVPSKSKEDCIARYKLLVELVQ) constitute an SANT 2 domain.

In terms of assembly, interacts (via J domain) with HSPA5. Interacts (via cytosolic domain) with ribosomes. Interacts (via SANT 2 domain) with SERPINA3; the interaction delays the formation of the covalent inhibitory complex SERPINA3-chymotrypsin, but does not alter the catalytic activity of SERPINA3. Interacts (via SANT 2 domain) with ITIH4 (via C-terminus); the interaction protects ITIH4 against in vitro cleavage by kallikrein. In terms of tissue distribution, widely expressed.

It is found in the endoplasmic reticulum membrane. It localises to the nucleus membrane. Its subcellular location is the microsome membrane. May modulate protein synthesis. The protein is DnaJ homolog subfamily C member 1 (Dnajc1) of Mus musculus (Mouse).